A 537-amino-acid polypeptide reads, in one-letter code: Membrane protein insertase YidC (537 aa).

4 consecutive transmembrane segments (helical) span residues 5-25, 353-373, 418-438, and 495-515; these read LIIA…IFPT, GNYG…FFPL, VNPL…FGLY, and MLML…GLVI.

It belongs to the OXA1/ALB3/YidC family. Type 1 subfamily. Interacts with the Sec translocase complex via SecD. Specifically interacts with transmembrane segments of nascent integral membrane proteins during membrane integration.

The protein localises to the cell inner membrane. Its function is as follows. Required for the insertion and/or proper folding and/or complex formation of integral membrane proteins into the membrane. Involved in integration of membrane proteins that insert both dependently and independently of the Sec translocase complex, as well as at least some lipoproteins. Aids folding of multispanning membrane proteins. This is Membrane protein insertase YidC from Citrifermentans bemidjiense (strain ATCC BAA-1014 / DSM 16622 / JCM 12645 / Bem) (Geobacter bemidjiensis).